Consider the following 120-residue polypeptide: ATP-dependent Clp protease adapter protein ClpS (120 aa).

It belongs to the ClpS family. Binds to the N-terminal domain of the chaperone ClpA.

Its function is as follows. Involved in the modulation of the specificity of the ClpAP-mediated ATP-dependent protein degradation. The polypeptide is ATP-dependent Clp protease adapter protein ClpS (Pseudomonas syringae pv. tomato (strain ATCC BAA-871 / DC3000)).